Reading from the N-terminus, the 315-residue chain is Probable cell division protein WhiA (315 aa).

Positions 280-313 (SLKELGDLLDPPLSKSGVAYRMRKLEESVKEILQ) form a DNA-binding region, H-T-H motif.

It belongs to the WhiA family.

Involved in cell division and chromosome segregation. The sequence is that of Probable cell division protein WhiA from Syntrophomonas wolfei subsp. wolfei (strain DSM 2245B / Goettingen).